A 214-amino-acid chain; its full sequence is Transcriptional regulatory protein MctR (214 aa).

The region spanning 8–124 is the Response regulatory domain; it reads RVLLIDNHPL…EIVSAIETVA (117 aa). The residue at position 59 (Asp-59) is a 4-aspartylphosphate. One can recognise an HTH luxR-type domain in the interval 143-208; sequence VEEGSDPLTP…GLIRYALDHG (66 aa). Positions 167–186 form a DNA-binding region, H-T-H motif; it reads NKEIAETLGITSATAETHRK.

It is found in the cytoplasm. Functionally, member of the two-component regulatory system MctS/MctR, which activates mctP expression. The chain is Transcriptional regulatory protein MctR from Rhizobium johnstonii (strain DSM 114642 / LMG 32736 / 3841) (Rhizobium leguminosarum bv. viciae).